The sequence spans 409 residues: NADH-quinone oxidoreductase subunit D (409 aa).

It belongs to the complex I 49 kDa subunit family. NDH-1 is composed of 14 different subunits. Subunits NuoB, C, D, E, F, and G constitute the peripheral sector of the complex.

It is found in the cell inner membrane. The enzyme catalyses a quinone + NADH + 5 H(+)(in) = a quinol + NAD(+) + 4 H(+)(out). In terms of biological role, NDH-1 shuttles electrons from NADH, via FMN and iron-sulfur (Fe-S) centers, to quinones in the respiratory chain. The immediate electron acceptor for the enzyme in this species is believed to be ubiquinone. Couples the redox reaction to proton translocation (for every two electrons transferred, four hydrogen ions are translocated across the cytoplasmic membrane), and thus conserves the redox energy in a proton gradient. The protein is NADH-quinone oxidoreductase subunit D of Helicobacter pylori (strain P12).